The sequence spans 100 residues: Esterase PE11 (100 aa).

Residues Val4–Asn94 enclose the PE domain.

It belongs to the mycobacterial PE family.

It localises to the secreted. The protein resides in the cell wall. The catalysed reaction is an acetyl ester + H2O = an aliphatic alcohol + acetate + H(+). It carries out the reaction a butanoate ester + H2O = an aliphatic alcohol + butanoate + H(+). It catalyses the reaction an octanoate ester + H2O = an aliphatic alcohol + octanoate + H(+). In terms of biological role, involved in cell wall lipids remodeling and in virulence. Restricts the biofilm growth and is essential for the optimal intracellular survival of M.tuberculosis. Shows esterase activity with a preference for short-chain esters, particularly pNP-acetate (C2) and pNP-butyrate (C4). Has weaker activity with pNP-octanoate (C8), pNP-laurate (C12) and pNP-myristate (C14). Shows weak long-chain triacylglycerol (TAG) hydrolase activity in vitro. Not necessary for PPE17 stability or for its localization on the mycobacterial surface. The sequence is that of Esterase PE11 from Mycobacterium tuberculosis (strain ATCC 25618 / H37Rv).